A 400-amino-acid polypeptide reads, in one-letter code: Selection and upkeep of intraepithelial T-cells protein 2 (400 aa).

The first 21 residues, 1 to 21 (MGATGVLLCVVLHFLQMVTQS), serve as a signal peptide directing secretion. Over 22–240 (SEKFTVTGLQ…LSGELFSWKR (219 aa)) the chain is Extracellular. Positions 23–133 (EKFTVTGLQR…VGEFYEEHIT (111 aa)) constitute an Ig-like V-type domain. 2 disulfides stabilise this stretch: Cys46-Cys120 and Cys160-Cys214. One can recognise an Ig-like C1-type domain in the interval 139-225 (ATSSVMYILM…LQNLLTHQEE (87 aa)). The N-linked (GlcNAc...) asparagine glycan is linked to Asn197. Residues 241–261 (VWIMILTTIGFMMIAFCMTYC) form a helical membrane-spanning segment. The Cytoplasmic segment spans residues 262-280 (VQQHLLYGTFSKGKCHWLK). The chain crosses the membrane as a helical span at residues 281 to 301 (STMIFMFSVIAVTGVMLILHL). Over 302-321 (KQRVPVSDQHFELDTLWLED) the chain is Extracellular. A helical membrane pass occupies residues 322–342 (ISVILCVLIVFIIKLISFIYF). At 343–400 (RLEGDHQGWSLPPYLSATPTAAICRLAVPEYSRGHLQLDSEDDLAGMGPSPFFITPCF) the chain is on the cytoplasmic side.

It belongs to the SKINT family. In terms of tissue distribution, expressed in skin, thymus and mammary gland.

Its subcellular location is the membrane. In terms of biological role, may act by engaging a cell surface molecule on immature T-cells in the embryonic thymus. In Mus musculus (Mouse), this protein is Selection and upkeep of intraepithelial T-cells protein 2 (Skint2).